The following is a 97-amino-acid chain: MKRICSIYKSPRKNEMYLYVLKSEALERVPENLLLAFGKPQHAFDLVLSPERKLSREDIHQVLENLDKQGYHLQMPPAEDEYIEHLPEELLRRNDPV.

In terms of domain architecture, YcgL spans 3–87; it reads RICSIYKSPR…AEDEYIEHLP (85 aa).

The chain is YcgL domain-containing protein PFL_1496 from Pseudomonas fluorescens (strain ATCC BAA-477 / NRRL B-23932 / Pf-5).